Here is a 63-residue protein sequence, read N- to C-terminus: Sperm protamine P1 (63 aa).

The segment at 1-63 (MARYRRHSRS…RYSRRGRRRY (63 aa)) is disordered.

The protein belongs to the protamine P1 family. As to expression, testis.

The protein localises to the nucleus. Its subcellular location is the chromosome. Its function is as follows. Protamines substitute for histones in the chromatin of sperm during the haploid phase of spermatogenesis. They compact sperm DNA into a highly condensed, stable and inactive complex. The protein is Sperm protamine P1 (PRM1) of Pseudantechinus macdonnellensis (Fat-tailed marsupial mouse).